The primary structure comprises 290 residues: Formamidopyrimidine-DNA glycosylase (290 aa).

P2 (schiff-base intermediate with DNA) is an active-site residue. Catalysis depends on E3, which acts as the Proton donor. K58 functions as the Proton donor; for beta-elimination activity in the catalytic mechanism. Residues H98, R126, and R171 each contribute to the DNA site. Residues 256-290 (FVYDRAGLPCRVCATPVRQIVQGQRSTFYCPKCQH) form an FPG-type zinc finger. R280 functions as the Proton donor; for delta-elimination activity in the catalytic mechanism.

The protein belongs to the FPG family. As to quaternary structure, monomer. It depends on Zn(2+) as a cofactor.

The catalysed reaction is Hydrolysis of DNA containing ring-opened 7-methylguanine residues, releasing 2,6-diamino-4-hydroxy-5-(N-methyl)formamidopyrimidine.. The enzyme catalyses 2'-deoxyribonucleotide-(2'-deoxyribose 5'-phosphate)-2'-deoxyribonucleotide-DNA = a 3'-end 2'-deoxyribonucleotide-(2,3-dehydro-2,3-deoxyribose 5'-phosphate)-DNA + a 5'-end 5'-phospho-2'-deoxyribonucleoside-DNA + H(+). Involved in base excision repair of DNA damaged by oxidation or by mutagenic agents. Acts as a DNA glycosylase that recognizes and removes damaged bases. Has a preference for oxidized purines, such as 7,8-dihydro-8-oxoguanine (8-oxoG). Has AP (apurinic/apyrimidinic) lyase activity and introduces nicks in the DNA strand. Cleaves the DNA backbone by beta-delta elimination to generate a single-strand break at the site of the removed base with both 3'- and 5'-phosphates. The chain is Formamidopyrimidine-DNA glycosylase from Cupriavidus taiwanensis (strain DSM 17343 / BCRC 17206 / CCUG 44338 / CIP 107171 / LMG 19424 / R1) (Ralstonia taiwanensis (strain LMG 19424)).